The following is a 94-amino-acid chain: HssA/B-like protein 49 (94 aa).

Residues 1 to 20 are disordered; it reads MTLFSSISSISNPMTSSKSS.

Belongs to the hssA/B family.

In Dictyostelium discoideum (Social amoeba), this protein is HssA/B-like protein 49 (hssl49).